A 411-amino-acid chain; its full sequence is Arginine deiminase (411 aa).

Cys-401 (amidino-cysteine intermediate) is an active-site residue.

It belongs to the arginine deiminase family.

It is found in the cytoplasm. The enzyme catalyses L-arginine + H2O = L-citrulline + NH4(+). Its pathway is amino-acid degradation; L-arginine degradation via ADI pathway; carbamoyl phosphate from L-arginine: step 1/2. This Streptococcus equi subsp. zooepidemicus (strain H70) protein is Arginine deiminase.